The chain runs to 921 residues: Dual serine/threonine and tyrosine protein kinase (921 aa).

The Protein kinase domain maps to 645 to 899; the sequence is PKLGRELGRG…PLLGIVEPSL (255 aa). ATP is bound by residues 651 to 659 and Lys674; that span reads LGRGQYGVV. Residue Asp770 is the Proton acceptor of the active site.

This sequence belongs to the protein kinase superfamily. Ser/Thr protein kinase family.

It localises to the cytoplasm. The protein localises to the cell membrane. The protein resides in the apical cell membrane. It is found in the basolateral cell membrane. Its subcellular location is the cell junction. It catalyses the reaction L-seryl-[protein] + ATP = O-phospho-L-seryl-[protein] + ADP + H(+). The catalysed reaction is L-threonyl-[protein] + ATP = O-phospho-L-threonyl-[protein] + ADP + H(+). The enzyme catalyses L-tyrosyl-[protein] + ATP = O-phospho-L-tyrosyl-[protein] + ADP + H(+). Functionally, may act as a positive regulator of ERK phosphorylation downstream of fibroblast growth factor-receptor activation. May induce both caspase-dependent apoptosis and caspase-independent cell death. May play a role in the embryonic development. In Takifugu rubripes (Japanese pufferfish), this protein is Dual serine/threonine and tyrosine protein kinase (dstyk).